The following is a 490-amino-acid chain: Thyroid hormone receptor alpha (490 aa).

The segment at 1–32 is disordered; that stretch reads MEQKPSKVECGSDPEENSARSPDGKRKRKNGQ. Residues 1–52 are modulating; that stretch reads MEQKPSKVECGSDPEENSARSPDGKRKRKNGQCSLKTSMSGYIPSYLDKDEQ. The Zn(2+) site is built by cysteine 53, cysteine 56, cysteine 70, cysteine 73, cysteine 91, cysteine 97, cysteine 107, and cysteine 110. 2 NR C4-type zinc fingers span residues 53 to 73 and 91 to 115; these read CVVC…CEGC and CKYD…FKKC. A DNA-binding region (nuclear receptor) is located at residues 53-127; the sequence is CVVCGDKATG…VGMAMDLVLD (75 aa). Positions 163–407 constitute an NR LBD domain; that stretch reads EEWDLIHIAT…EGQQLLGMHV (245 aa). 3,3',5-triiodo-L-thyronine contacts are provided by arginine 228 and serine 277. The segment at 457-490 is disordered; the sequence is AVCGEDDSSEADSPSSSEEEPEVCEDLAGNAASP.

The protein belongs to the nuclear hormone receptor family. NR1 subfamily. As to quaternary structure, binds DNA as a dimer; homodimer and heterodimer with RXRB. Interacts with NCOA3 and NCOA6 coactivators, leading to a strong increase of transcription of target genes. Probably interacts with SFPQ. Interacts with C1D. Interacts with AKAP13. Interacts with TP53INP2. Interacts with PER2. Isoform alpha-2 and isoform alpha-1 interact with TACC1, but the interaction with alpha-1 is weaker. The interaction with isoform alpha-1, but not alpha-2, is decreased in the presence of thyroid hormone T3.

The protein resides in the nucleus. Its subcellular location is the cytoplasm. Nuclear hormone receptor that can act as a repressor or activator of transcription. High affinity receptor for thyroid hormones, including triiodothyronine and thyroxine. In terms of biological role, does not bind thyroid hormone and functions as a weak dominant negative inhibitor of thyroid hormone action. The protein is Thyroid hormone receptor alpha (THRA) of Homo sapiens (Human).